The primary structure comprises 408 residues: Zinc chaperone AztD (408 aa).

Residues 1–21 (MLRHLAGASALALTLAGAGFA) form the signal peptide. Residues 23-29 (DHDHDHE) carry the N-terminal Zn(2+)-binding motif; binds a third Zn(2+) with low affinity motif. Zn(2+)-binding residues include His99, His102, Asp104, His124, His167, His218, and His408. The cysteines at positions 214 and 231 are disulfide-linked.

Monomer.

The protein resides in the periplasm. Acts as a zinc chaperone in the AztABCD zinc transport system. Directly transfers one zinc cation to the solute binding protein AztC; the transfer occurs without the formation of a stable interaction. Binds 3 Zn(2+), two with high affinity and one with low affinity, and transfers only Zn(2+) bound to site 2 to AztC. Likely functions to store zinc in the periplasm and may be important for zinc accumulation in zinc-limited environments. This is Zinc chaperone AztD from Paracoccus denitrificans (strain Pd 1222).